The chain runs to 125 residues: Prefoldin subunit beta (125 aa).

This sequence belongs to the prefoldin subunit beta family. Heterohexamer of two alpha and four beta subunits.

The protein resides in the cytoplasm. Its function is as follows. Molecular chaperone capable of stabilizing a range of proteins. Seems to fulfill an ATP-independent, HSP70-like function in archaeal de novo protein folding. In Pyrobaculum islandicum (strain DSM 4184 / JCM 9189 / GEO3), this protein is Prefoldin subunit beta.